The sequence spans 391 residues: EYQSKKIMADHGVTVQRFFVADSANDALEAAQRLKAKEIVLKAQILAGGRGKGVFNSGLKGGVHLTKDPKIVEQLAKQMIGYNLSTKQTPKDGVTVKKVMVAEALNISRETYFAILMDRACNGPVMVGSPQGGVDIEEVAVTSPELIFKEEIDIFEGIKDHQALQMAKNLGFKGPLQQQAADQIKKLYNLFLKIDATQVEVNPFGETPEGQVVCFDAKINFDDNAEFRQKEIFAMDDKSENEPIENEAAKYDLKYIGLDGNIACFVNGAGLAMATCDIISLNGGKPANFLDLGGGVKEAQVYQAFKLLTADPKVEAILVNIFGGIVNCAIIANGITRACRELELKVPLVVRLEGTNVHEAQRILNESGLPIMSANDLEDAAKKAVASVAKK.

Positions 5-233 (KKIMADHGVT…NAEFRQKEIF (229 aa)) constitute an ATP-grasp domain. GTP is bound by residues Gln-16, 49–51 (GRG), and Leu-105. Residues Asn-202 and Asp-216 each contribute to the Mg(2+) site. Residues Asn-267 and 324 to 326 (GIV) contribute to the substrate site.

Belongs to the succinate/malate CoA ligase beta subunit family. GTP-specific subunit beta subfamily. As to quaternary structure, heterodimer of an alpha and a beta subunit. The beta subunit determines specificity for GTP. Mg(2+) serves as cofactor. In terms of tissue distribution, widely expressed. Not present in breast muscle.

Its subcellular location is the mitochondrion. It carries out the reaction GTP + succinate + CoA = succinyl-CoA + GDP + phosphate. Its pathway is carbohydrate metabolism; tricarboxylic acid cycle; succinate from succinyl-CoA (ligase route): step 1/1. GTP-specific succinyl-CoA synthetase functions in the citric acid cycle (TCA), coupling the hydrolysis of succinyl-CoA to the synthesis of GTP and thus represents the only step of substrate-level phosphorylation in the TCA. The beta subunit provides nucleotide specificity of the enzyme and binds the substrate succinate, while the binding sites for coenzyme A and phosphate are found in the alpha subunit. This chain is Succinate--CoA ligase [GDP-forming] subunit beta, mitochondrial, found in Columba livia (Rock dove).